The sequence spans 137 residues: Large ribosomal subunit protein uL16 (137 aa).

It belongs to the universal ribosomal protein uL16 family. In terms of assembly, part of the 50S ribosomal subunit.

Functionally, binds 23S rRNA and is also seen to make contacts with the A and possibly P site tRNAs. The polypeptide is Large ribosomal subunit protein uL16 (Xylella fastidiosa (strain M23)).